The primary structure comprises 364 residues: MRLLIAGGGTGGHLFPGIAVAEEFLSRKKGNEVLFVGTWRGIEARVLPKLGYRLECITAAGIRGKGSVARAKGLAKFLYGYAQSRKILKEFKPDLVLGVGGYASAPALLAARGMHIPRFIHEQNAIPGFTNKMLATVAERVFISLEESRKFFPEERTLLTGNPLRRQILEQVALAPQEERTDDAFHLLVFGGSAGAHRINLIMGEVLPHLEDVKERLRITHQTGENDLEDVTSAYEEQGVAADVVAFIDSMADAYRWADLVVCRAGATTIAEITACGKPCIFIPYPHAVDDHQRRNAEALLKRGAGFVIIEQELSGEVLAKTIRDLMADPARLKSVGEAAQGLARLDAAQVIVDEMMTSKRKEK.

UDP-N-acetyl-alpha-D-glucosamine-binding positions include 10–12 (TGG), Asn-124, Arg-165, Ser-193, Ile-248, and Gln-293.

The protein belongs to the glycosyltransferase 28 family. MurG subfamily.

The protein localises to the cell inner membrane. The catalysed reaction is di-trans,octa-cis-undecaprenyl diphospho-N-acetyl-alpha-D-muramoyl-L-alanyl-D-glutamyl-meso-2,6-diaminopimeloyl-D-alanyl-D-alanine + UDP-N-acetyl-alpha-D-glucosamine = di-trans,octa-cis-undecaprenyl diphospho-[N-acetyl-alpha-D-glucosaminyl-(1-&gt;4)]-N-acetyl-alpha-D-muramoyl-L-alanyl-D-glutamyl-meso-2,6-diaminopimeloyl-D-alanyl-D-alanine + UDP + H(+). The protein operates within cell wall biogenesis; peptidoglycan biosynthesis. In terms of biological role, cell wall formation. Catalyzes the transfer of a GlcNAc subunit on undecaprenyl-pyrophosphoryl-MurNAc-pentapeptide (lipid intermediate I) to form undecaprenyl-pyrophosphoryl-MurNAc-(pentapeptide)GlcNAc (lipid intermediate II). The protein is UDP-N-acetylglucosamine--N-acetylmuramyl-(pentapeptide) pyrophosphoryl-undecaprenol N-acetylglucosamine transferase of Geobacter metallireducens (strain ATCC 53774 / DSM 7210 / GS-15).